Reading from the N-terminus, the 297-residue chain is Nucleotide-binding protein Bsph_0448 (297 aa).

19–26 (GMSGAGKT) provides a ligand contact to ATP. Residue 70-73 (DMRG) participates in GTP binding.

It belongs to the RapZ-like family.

In terms of biological role, displays ATPase and GTPase activities. The protein is Nucleotide-binding protein Bsph_0448 of Lysinibacillus sphaericus (strain C3-41).